A 416-amino-acid chain; its full sequence is UDP-N-acetylglucosamine 1-carboxyvinyltransferase (416 aa).

22-23 is a phosphoenolpyruvate binding site; that stretch reads KN. A UDP-N-acetyl-alpha-D-glucosamine-binding site is contributed by Arg-91. Cys-115 serves as the catalytic Proton donor. The residue at position 115 (Cys-115) is a 2-(S-cysteinyl)pyruvic acid O-phosphothioketal. Residues 120 to 124, Asp-303, and Ile-325 each bind UDP-N-acetyl-alpha-D-glucosamine; that span reads RPVDL.

This sequence belongs to the EPSP synthase family. MurA subfamily.

The protein resides in the cytoplasm. It catalyses the reaction phosphoenolpyruvate + UDP-N-acetyl-alpha-D-glucosamine = UDP-N-acetyl-3-O-(1-carboxyvinyl)-alpha-D-glucosamine + phosphate. It functions in the pathway cell wall biogenesis; peptidoglycan biosynthesis. Functionally, cell wall formation. Adds enolpyruvyl to UDP-N-acetylglucosamine. This Oleidesulfovibrio alaskensis (strain ATCC BAA-1058 / DSM 17464 / G20) (Desulfovibrio alaskensis) protein is UDP-N-acetylglucosamine 1-carboxyvinyltransferase.